The following is a 390-amino-acid chain: 8-amino-7-oxononanoate synthase (390 aa).

Arg-20 lines the substrate pocket. 107-108 (GF) is a pyridoxal 5'-phosphate binding site. His-132 contacts substrate. Residues Ser-179, 204–207 (DDAH), and 235–238 (TLSK) each bind pyridoxal 5'-phosphate. The residue at position 238 (Lys-238) is an N6-(pyridoxal phosphate)lysine. Thr-352 contributes to the substrate binding site.

This sequence belongs to the class-II pyridoxal-phosphate-dependent aminotransferase family. BioF subfamily. Homodimer. Pyridoxal 5'-phosphate is required as a cofactor.

It carries out the reaction 6-carboxyhexanoyl-[ACP] + L-alanine + H(+) = (8S)-8-amino-7-oxononanoate + holo-[ACP] + CO2. The protein operates within cofactor biosynthesis; biotin biosynthesis. Catalyzes the decarboxylative condensation of pimeloyl-[acyl-carrier protein] and L-alanine to produce 8-amino-7-oxononanoate (AON), [acyl-carrier protein], and carbon dioxide. In Exiguobacterium sibiricum (strain DSM 17290 / CCUG 55495 / CIP 109462 / JCM 13490 / 255-15), this protein is 8-amino-7-oxononanoate synthase.